The sequence spans 187 residues: Peptidyl-tRNA hydrolase (187 aa).

A tRNA-binding site is contributed by Tyr15. The active-site Proton acceptor is His20. Residues Phe64, Asn66, and Asn112 each contribute to the tRNA site.

This sequence belongs to the PTH family. As to quaternary structure, monomer.

The protein resides in the cytoplasm. It carries out the reaction an N-acyl-L-alpha-aminoacyl-tRNA + H2O = an N-acyl-L-amino acid + a tRNA + H(+). Functionally, hydrolyzes ribosome-free peptidyl-tRNAs (with 1 or more amino acids incorporated), which drop off the ribosome during protein synthesis, or as a result of ribosome stalling. In terms of biological role, catalyzes the release of premature peptidyl moieties from peptidyl-tRNA molecules trapped in stalled 50S ribosomal subunits, and thus maintains levels of free tRNAs and 50S ribosomes. The polypeptide is Peptidyl-tRNA hydrolase (Bacteroides fragilis (strain ATCC 25285 / DSM 2151 / CCUG 4856 / JCM 11019 / LMG 10263 / NCTC 9343 / Onslow / VPI 2553 / EN-2)).